The sequence spans 847 residues: Pep5-like zinc finger protein C16A10.03c (847 aa).

The CHCR repeat unit spans residues 387–526; sequence YIEAIPFSDS…GIWLFNSDPM (140 aa). An RING-type; atypical zinc finger spans residues 780–814; sequence CDNCEGLLDVPFVSYSCLHLVHRDCATETVCPKCK.

It localises to the cytoplasm. The protein resides in the nucleus. The polypeptide is Pep5-like zinc finger protein C16A10.03c (Schizosaccharomyces pombe (strain 972 / ATCC 24843) (Fission yeast)).